We begin with the raw amino-acid sequence, 268 residues long: Short chain dehydrogenase/reductase dpchG (268 aa).

NADP(+) is bound by residues V18, D70, N97, K131, Y165, and K169. Y165 (proton acceptor) is an active-site residue. The active-site Lowers pKa of active site Tyr is K169.

The protein belongs to the short-chain dehydrogenases/reductases (SDR) family.

Its pathway is secondary metabolite biosynthesis; terpenoid biosynthesis. In terms of biological role, short chain dehydrogenase/reductase; part of the gene cluster that mediates the biosynthesis of the diterpenoid pyrones higginsianins A and B. The first step of the pathway is the synthesis of the alpha-pyrone moiety by the polyketide synthase dpchA via condensation of one acetyl-CoA starter unit with 3 malonyl-CoA units and 2 methylations. The alpha-pyrone is then combined with geranylgeranyl pyrophosphate (GGPP) formed by the GGPP synthase dpchD through the action of the prenyltransferase dpchC to yield a linear alpha-pyrone diterpenoid. Subsequent steps in the diterpenoid pyrone biosynthetic pathway involve the decalin core formation, which is initiated by the epoxidation of the C10-C11 olefin by the FAD-dependent oxidoreductase dpchE, and is followed by a cyclization cascade catalyzed by the terpene cyclase dpchB. The short chain dehydrogenase/reductase dpchG then oxidizes the 8S hydroxy group to a ketone and the short chain dehydrogenase/reductase dpchH reduces the ketone to the 8R hydroxy group to yield higginsianin B. Finally, the FAD-dependent oxidoreductase dpchF converts higginsianin B into higginsianin A. The protein is Short chain dehydrogenase/reductase dpchG of Colletotrichum higginsianum (strain IMI 349063) (Crucifer anthracnose fungus).